The sequence spans 168 residues: MTANQTPQTVHYATVTWDQLHRDARLLAATLMQKHGPFRGIVAITRGGLIPAAILGREMGCRLIESVSVISYAGEEGTQHEPKVVKPPVAAGDGEGFLIVDDLVDSGVTARIVRELLPKAVFACLYAKPEGKPFTDHYVTEVAQDTWVLFPWDTAPLFVPPLVRSEGE.

5-phospho-alpha-D-ribose 1-diphosphate-binding positions include 46 to 47 (RG) and 101 to 109 (DDLVDSGVT). Asp102 contacts Mg(2+). Asp105 contacts guanine. The xanthine site is built by Asp105 and Val148. Residues 105–109 (DSGVT) and 147–148 (WV) each bind GMP.

This sequence belongs to the purine/pyrimidine phosphoribosyltransferase family. XGPT subfamily. In terms of assembly, homotetramer. Mg(2+) serves as cofactor.

Its subcellular location is the cell inner membrane. It catalyses the reaction GMP + diphosphate = guanine + 5-phospho-alpha-D-ribose 1-diphosphate. The catalysed reaction is XMP + diphosphate = xanthine + 5-phospho-alpha-D-ribose 1-diphosphate. The enzyme catalyses IMP + diphosphate = hypoxanthine + 5-phospho-alpha-D-ribose 1-diphosphate. It participates in purine metabolism; GMP biosynthesis via salvage pathway; GMP from guanine: step 1/1. Its pathway is purine metabolism; XMP biosynthesis via salvage pathway; XMP from xanthine: step 1/1. Functionally, purine salvage pathway enzyme that catalyzes the transfer of the ribosyl-5-phosphate group from 5-phospho-alpha-D-ribose 1-diphosphate (PRPP) to the N9 position of the 6-oxopurines guanine and xanthine to form the corresponding ribonucleotides GMP (guanosine 5'-monophosphate) and XMP (xanthosine 5'-monophosphate), with the release of PPi. To a lesser extent, also acts on hypoxanthine. This chain is Xanthine-guanine phosphoribosyltransferase, found in Gluconobacter oxydans (strain 621H) (Gluconobacter suboxydans).